A 265-amino-acid polypeptide reads, in one-letter code: Cytoplasmic envelopment protein 1 (265 aa).

This sequence belongs to the herpesviridae cytoplasmic envelopment protein 1 family.

The protein resides in the virion. The protein localises to the virion tegument. It localises to the host cytoplasm. It is found in the host Golgi apparatus. Functionally, plays a critical role in cytoplasmic virus egress. Participates in the final step of tegumentation and envelope acquisition within the host cytoplasm. In Saimiriine herpesvirus 2 (strain 11) (SaHV-2), this protein is Cytoplasmic envelopment protein 1 (42).